A 789-amino-acid chain; its full sequence is Polyribonucleotide nucleotidyltransferase (789 aa).

Positions 494 and 500 each coordinate Mg(2+). The KH domain occupies 561–620 (PRIESIFINKDKIRNVIGSGGKNIREICEKTGARVEIMQDGTVMIYAINNDAVEYAKNMI). The region spanning 630–697 (GKVFDGTVIE…DREYVQLSMR (68 aa)) is the S1 motif domain. The segment at 709–789 (GELYNIRKTN…NEVPRKPRFF (81 aa)) is disordered. Residues 737 to 749 (SEKKRRGSGRSRR) show a composition bias toward basic residues. The segment covering 763–780 (NNGFGNGNRSFNDNRNGN) has biased composition (low complexity).

It belongs to the polyribonucleotide nucleotidyltransferase family. Mg(2+) is required as a cofactor.

It localises to the cytoplasm. It carries out the reaction RNA(n+1) + phosphate = RNA(n) + a ribonucleoside 5'-diphosphate. In terms of biological role, involved in mRNA degradation. Catalyzes the phosphorolysis of single-stranded polyribonucleotides processively in the 3'- to 5'-direction. In Ehrlichia ruminantium (strain Gardel), this protein is Polyribonucleotide nucleotidyltransferase.